Here is a 490-residue protein sequence, read N- to C-terminus: GTPase Der (490 aa).

EngA-type G domains are found at residues 3-166 (PVVA…MEDL) and 203-376 (IKLA…DSST). GTP contacts are provided by residues 9-16 (GRPNVGKS), 56-60 (DTGGI), 118-121 (NKTD), 209-216 (GRPNVGKS), 256-260 (DTAGV), and 321-324 (NKWD). One can recognise a KH-like domain in the interval 377–461 (RRVGTSMLTR…PIRIQFKEGE (85 aa)).

This sequence belongs to the TRAFAC class TrmE-Era-EngA-EngB-Septin-like GTPase superfamily. EngA (Der) GTPase family. Associates with the 50S ribosomal subunit.

Its function is as follows. GTPase that plays an essential role in the late steps of ribosome biogenesis. The chain is GTPase Der from Escherichia fergusonii (strain ATCC 35469 / DSM 13698 / CCUG 18766 / IAM 14443 / JCM 21226 / LMG 7866 / NBRC 102419 / NCTC 12128 / CDC 0568-73).